The chain runs to 289 residues: U3 small nucleolar ribonucleoprotein protein imp4 (289 aa).

The segment covering 42-65 (LNKDLQEDSQLQKDYKYDESRATQ) has biased composition (basic and acidic residues). The segment at 42–82 (LNKDLQEDSQLQKDYKYDESRATQEETETNLDDEYHRLGER) is disordered. The Brix domain occupies 84–266 (PKVLVTTSRE…LFEITLGTVD (183 aa)).

As to quaternary structure, component of a heterotrimeric complex containing imp3, imp4 and mpp10.

Its subcellular location is the nucleus. The protein localises to the nucleolus. Its function is as follows. Component of the U3 small nucleolar ribonucleoprotein. Required for the early cleavages at sites A0, A1 and A2 during 18S ribosomal pre-RNA processing. The protein is U3 small nucleolar ribonucleoprotein protein imp4 (imp4) of Schizosaccharomyces pombe (strain 972 / ATCC 24843) (Fission yeast).